The primary structure comprises 1770 residues: NEDD4-binding protein 2 (1770 aa).

The tract at residues 1–40 (MPRRRKNLGGNPFRKTANPKEVVVSSVASREEPTTTLPSM) is disordered. Residues 46–89 (DQEELFTSISEIFSDLDPDVVYLMLSECDFKVENAMDCLLELSA) enclose the CUE domain. Coiled-coil stretches lie at residues 90–177 (TDTK…NDSS) and 218–259 (HSVL…IAGC). Residues 95-129 (EESSSQSFVASENQVGAAESKIMEKRPEEESEDSK) are disordered. A compositionally biased stretch (polar residues) spans 97–108 (SSSQSFVASENQ). The segment covering 115–129 (KIMEKRPEEESEDSK) has biased composition (basic and acidic residues). ATP is bound at residue 447 to 454 (GLPGSGKS). Disordered regions lie at residues 712 to 756 (SKTD…GEIV), 795 to 822 (KTIG…YNYP), 836 to 862 (DCVQ…ASEP), and 890 to 913 (SLAQ…LEIG). Positions 843–856 (SPHESVEDGRKSQC) are enriched in basic and acidic residues. Ser906 bears the Phosphoserine mark. At Thr1210 the chain carries Phosphothreonine. Residues 1580-1606 (NENVTSHTGQKSKEKKPKKLKETEETP) form a disordered region. Residues 1691–1770 (LDLHGLHVDE…KPGCLKVMLK (80 aa)) form the Smr domain.

As to quaternary structure, binds NEDD4. Binds BCL3 and CREBBP. In terms of processing, ubiquitinated; this targets the protein for degradation by the proteasome.

The protein localises to the cytoplasm. Functionally, has 5'-polynucleotide kinase and nicking endonuclease activity. May play a role in DNA repair or recombination. This Homo sapiens (Human) protein is NEDD4-binding protein 2 (N4BP2).